An 81-amino-acid polypeptide reads, in one-letter code: Trefoil factor 3 (81 aa).

An N-terminal signal peptide occupies residues 1 to 22 (METRAFWTTLLLVLVAGSSCKA). The P-type domain maps to 31-74 (SQCMVPANVRVDCGYPTVTSEQCNNRGCCFDSSIPNVPWCFKPL). 3 disulfides stabilise this stretch: Cys-33–Cys-59, Cys-43–Cys-58, and Cys-53–Cys-70.

As to quaternary structure, monomer. Homodimer; disulfide-linked. In terms of tissue distribution, expressed in goblet cells of the intestines, and colon, in paraventricular hypothalamus and supraoptic nuclei. Weakly expressed in gastric epithelial cells (at protein level). Expressed by goblet cells of small and large intestinal epithelia, kidney and stomach. Expressed in the paraventricular hypothalamus, arcuate nucleus and amygdala of the brain. Weakly expressed in gastric epithelial cells.

The protein localises to the secreted. It is found in the extracellular space. Its subcellular location is the extracellular matrix. The protein resides in the cytoplasm. Its function is as follows. Involved in the maintenance and repair of the intestinal mucosa. Promotes the mobility of epithelial cells in healing processes (motogen). The sequence is that of Trefoil factor 3 (Tff3) from Rattus norvegicus (Rat).